Consider the following 251-residue polypeptide: 5-oxoprolinase subunit A (251 aa).

Belongs to the LamB/PxpA family. In terms of assembly, forms a complex composed of PxpA, PxpB and PxpC.

It catalyses the reaction 5-oxo-L-proline + ATP + 2 H2O = L-glutamate + ADP + phosphate + H(+). Its function is as follows. Catalyzes the cleavage of 5-oxoproline to form L-glutamate coupled to the hydrolysis of ATP to ADP and inorganic phosphate. The chain is 5-oxoprolinase subunit A from Vibrio parahaemolyticus serotype O3:K6 (strain RIMD 2210633).